A 334-amino-acid chain; its full sequence is MARDEVRRILPADIKREVLIKDEKAETNPKWGFPPERRPMEMHMQFGIINLDKPPGPTSHEVVAWIKKLFNLSKAGHGGTLDPKVSGVLPVALERATRVVQALLPAGKEYVALMHLHGDIPEDKILAVMKEFQGEIIQRPPLRSAVKRRLRTRKVYYIEVLEIEGRDVLFRVGVEAGTYIRSLIHHIGLALGVGAHMAELRRTRSGPFKEDETLVTLHDLVDYYHFWKEDGIEEYFRKAIQPMEKAVEHLPKVWIRDSAVAAVTHGADLAVPGIVKLHKGIKKGDLVAIMTLKDELVALGKAMMTSGEMLQRSKGIAVDVDKVFMPRDWYPRMW.

Asp-82 functions as the Nucleophile in the catalytic mechanism. In terms of domain architecture, PUA spans 250–325; that stretch reads LPKVWIRDSA…IAVDVDKVFM (76 aa).

Belongs to the pseudouridine synthase TruB family. Type 2 subfamily.

The catalysed reaction is uridine(55) in tRNA = pseudouridine(55) in tRNA. Functionally, could be responsible for synthesis of pseudouridine from uracil-55 in the psi GC loop of transfer RNAs. This chain is Probable tRNA pseudouridine synthase B, found in Thermococcus gammatolerans (strain DSM 15229 / JCM 11827 / EJ3).